Here is a 281-residue protein sequence, read N- to C-terminus: Bifunctional protein FolD (281 aa).

NADP(+)-binding positions include 165 to 167 (GRG), Thr192, and Val233.

Belongs to the tetrahydrofolate dehydrogenase/cyclohydrolase family. In terms of assembly, homodimer.

The catalysed reaction is (6R)-5,10-methylene-5,6,7,8-tetrahydrofolate + NADP(+) = (6R)-5,10-methenyltetrahydrofolate + NADPH. It carries out the reaction (6R)-5,10-methenyltetrahydrofolate + H2O = (6R)-10-formyltetrahydrofolate + H(+). It participates in one-carbon metabolism; tetrahydrofolate interconversion. Catalyzes the oxidation of 5,10-methylenetetrahydrofolate to 5,10-methenyltetrahydrofolate and then the hydrolysis of 5,10-methenyltetrahydrofolate to 10-formyltetrahydrofolate. The polypeptide is Bifunctional protein FolD (Mycobacterium tuberculosis (strain ATCC 25177 / H37Ra)).